Reading from the N-terminus, the 93-residue chain is Putative pterin-4-alpha-carbinolamine dehydratase (93 aa).

This sequence belongs to the pterin-4-alpha-carbinolamine dehydratase family.

The enzyme catalyses (4aS,6R)-4a-hydroxy-L-erythro-5,6,7,8-tetrahydrobiopterin = (6R)-L-erythro-6,7-dihydrobiopterin + H2O. The sequence is that of Putative pterin-4-alpha-carbinolamine dehydratase from Trichodesmium erythraeum (strain IMS101).